The primary structure comprises 144 residues: Interferon-induced transmembrane protein 2 (144 aa).

An N-acetylmethionine modification is found at Met-1. Residues 1–56 lie on the Cytoplasmic side of the membrane; it reads MSHNSQAFLSTNAGLPPSYETIKEEYGVTELGEPSNSAVVRTTVINMPREVSVPDH. Tyr-19 carries the phosphotyrosine modification. The helical intramembrane region spans 57 to 77; that stretch reads VVWSLFNTLFFNACCLGFVAY. S-palmitoyl cysteine attachment occurs at residues Cys-70, Cys-71, and Cys-104. The Cytoplasmic segment spans residues 78 to 110; sequence AYSVKSRDRKMVGDVVGAQAYASTAKCLNISSL. Residues 111–131 traverse the membrane as a helical segment; sequence IFSILMVIICIIIFSTTSVVV. At 132–144 the chain is on the extracellular side; that stretch reads FQSFAQRTPHSGF.

The protein belongs to the CD225/Dispanin family. In terms of assembly, interacts with CD81. Post-translationally, palmitoylation on membrane-proximal cysteines controls clustering in membrane compartments and antiviral activity. Phosphorylation at Tyr-19 is required for endosomal and lysosomal location. In terms of tissue distribution, predominantly expressed in nascent primordial germ cells, as well as in gonadal germ cells.

It localises to the cell membrane. Its subcellular location is the lysosome membrane. The protein resides in the late endosome membrane. In terms of biological role, IFN-induced antiviral protein which inhibits the entry of viruses to the host cell cytoplasm, permitting endocytosis, but preventing subsequent viral fusion and release of viral contents into the cytosol. Active against multiple viruses, including influenza A virus, SARS coronavirus (SARS-CoV), Marburg virus (MARV) and Ebola virus (EBOV), Dengue virus (DNV) and West Nile virus (WNV). Can inhibit: influenza virus hemagglutinin protein-mediated viral entry, MARV and EBOV GP1,2-mediated viral entry and SARS-CoV S protein-mediated viral entry. Induces cell cycle arrest and mediates apoptosis by caspase activation and in p53-independent manner. The polypeptide is Interferon-induced transmembrane protein 2 (Ifitm2) (Mus musculus (Mouse)).